The chain runs to 100 residues: MKLLPREKDKLLLFTAALLAEKRRNRGLKLNYPEAIALISAVILEGAREGKSVAELMDVGKNVLTRDDVMIGVPEMITNVQVEATFSDGTKLVTVHDPII.

It belongs to the urease gamma subunit family. Heterotrimer of UreA (gamma), UreB (beta) and UreC (alpha) subunits. Three heterotrimers associate to form the active enzyme.

Its subcellular location is the cytoplasm. The enzyme catalyses urea + 2 H2O + H(+) = hydrogencarbonate + 2 NH4(+). It participates in nitrogen metabolism; urea degradation; CO(2) and NH(3) from urea (urease route): step 1/1. This is Urease subunit gamma from Blochmanniella pennsylvanica (strain BPEN).